The sequence spans 115 residues: NADH-ubiquinone oxidoreductase chain 3 (115 aa).

A run of 3 helical transmembrane segments spans residues 4-24 (IVIL…AFWL), 55-75 (FFLI…LLPL), and 84-104 (TYFT…GLMY).

The protein belongs to the complex I subunit 3 family. As to quaternary structure, core subunit of respiratory chain NADH dehydrogenase (Complex I) which is composed of 45 different subunits. Interacts with TMEM186. Interacts with TMEM242.

Its subcellular location is the mitochondrion inner membrane. It carries out the reaction a ubiquinone + NADH + 5 H(+)(in) = a ubiquinol + NAD(+) + 4 H(+)(out). Core subunit of the mitochondrial membrane respiratory chain NADH dehydrogenase (Complex I) which catalyzes electron transfer from NADH through the respiratory chain, using ubiquinone as an electron acceptor. Essential for the catalytic activity of complex I. In Eligmodontia typus (Highland gerbil mouse), this protein is NADH-ubiquinone oxidoreductase chain 3.